The following is a 342-amino-acid chain: Biotin synthase (342 aa).

The Radical SAM core domain maps to 36–260; sequence NRIQISTLLS…MMPKSYIRLS (225 aa). Residues Cys51, Cys55, and Cys58 each contribute to the [4Fe-4S] cluster site. Residues Cys95, Cys126, Cys186, and Arg258 each contribute to the [2Fe-2S] cluster site.

Belongs to the radical SAM superfamily. Biotin synthase family. As to quaternary structure, homodimer. The cofactor is [4Fe-4S] cluster. [2Fe-2S] cluster serves as cofactor.

It carries out the reaction (4R,5S)-dethiobiotin + (sulfur carrier)-SH + 2 reduced [2Fe-2S]-[ferredoxin] + 2 S-adenosyl-L-methionine = (sulfur carrier)-H + biotin + 2 5'-deoxyadenosine + 2 L-methionine + 2 oxidized [2Fe-2S]-[ferredoxin]. It functions in the pathway cofactor biosynthesis; biotin biosynthesis; biotin from 7,8-diaminononanoate: step 2/2. Functionally, catalyzes the conversion of dethiobiotin (DTB) to biotin by the insertion of a sulfur atom into dethiobiotin via a radical-based mechanism. The protein is Biotin synthase of Buchnera aphidicola subsp. Schizaphis graminum (strain Sg).